The chain runs to 206 residues: Heterochromatin protein 1 (206 aa).

Disordered regions lie at residues 1–24 (MGKK…EEEY) and 47–145 (GYPE…GFDR). S11 and S15 each carry phosphoserine. Residues 24-82 (YAVEKIIDRRVRKGKVEYYLKWKGYPETENTWEPENNLDCQDLIQQYEASRKDEEKSAA) enclose the Chromo 1 domain. Over residues 50-60 (ETENTWEPENN) the composition is skewed to low complexity. Residues 72–98 (ASRKDEEKSAASKKDRPSSSAKAKETQ) show a composition bias toward basic and acidic residues. The interval 95–206 (KETQGRASSS…RLSWYSDNED (112 aa)) is binds to Su(var)39. S102, S103, and S113 each carry phosphoserine. Phosphothreonine is present on residues T127, T128, and T134. Positions 147 to 205 (LEAEKILGASDNNGRLTFLIQFKGVDQAEMVPSSVANEKIPRMVIHFYEERLSWYSDNE) constitute a Chromo 2 domain.

As to quaternary structure, homodimer. Probably associates with Su(var)3-9. Interacts with Mcm10. Interacts (via chromoshadow domain) with piwi (via N-terminal region). Interacts with Rrp6. Associates with and may be part of the HipHop-HOAP telomere capping complex but is not required for its stability or telomere localization. Interacts (via the chromo domain 2 (chromoshadow domain) and the hinge region between chromo domains 1 and 2) with cav/HOAP (via C-terminus); the interaction is direct. Each molecule of cav/HOAP interacts with 2 molecules of Su(var)205/HP1. Interacts with HipHop (via N-terminus). Interacts with moi/modigliani; the interaction is direct. Interacts (via chromo domain 1) with His3/histone 3 (via N-terminal tail methylated at 'Lys-10'); the interaction is direct. Salivary gland (at protein level).

It localises to the nucleus. The protein localises to the nucleoplasm. It is found in the chromosome. Its subcellular location is the telomere. Structural component of heterochromatin, involved in gene repression and the modification of position-effect-variegation. Recognizes and binds histone H3 tails methylated at 'Lys-9', leading to epigenetic repression. Stabilizes chromatin-associated RNAs probably by binding to them and thereby preventing their degradation. Associates with, and may be a part of, the HipHop-HOAP complex that recruits the MTV complex to form the terminin telomere-capping complex, which binds to chromosome ends in a sequence-independent manner and prevents telomere fusion. Telomere capping is independent of the origin recognition complex (ORC). This Drosophila melanogaster (Fruit fly) protein is Heterochromatin protein 1.